The primary structure comprises 354 residues: Probable disease resistance protein At5g45490 (354 aa).

Residues 33–53 (AKGNLEKKRDDNEEEERLKTE) adopt a coiled-coil conformation. Residues 45–122 (EEEERLKTES…VYAPRVWVSM (78 aa)) enclose the NB-ARC domain. 91–98 (GEYGVGKT) is a binding site for ATP. The segment at 328-354 (DDEVGPVGSTHGQTDSSNRQPANQASS) is disordered. Polar residues predominate over residues 337–354 (THGQTDSSNRQPANQASS).

Possible disease resistance protein. This is Probable disease resistance protein At5g45490 from Arabidopsis thaliana (Mouse-ear cress).